Reading from the N-terminus, the 393-residue chain is NAD(P)H-quinone oxidoreductase subunit H, chloroplastic (393 aa).

Belongs to the complex I 49 kDa subunit family. NDH is composed of at least 16 different subunits, 5 of which are encoded in the nucleus.

It is found in the plastid. Its subcellular location is the chloroplast thylakoid membrane. It catalyses the reaction a plastoquinone + NADH + (n+1) H(+)(in) = a plastoquinol + NAD(+) + n H(+)(out). It carries out the reaction a plastoquinone + NADPH + (n+1) H(+)(in) = a plastoquinol + NADP(+) + n H(+)(out). Functionally, NDH shuttles electrons from NAD(P)H:plastoquinone, via FMN and iron-sulfur (Fe-S) centers, to quinones in the photosynthetic chain and possibly in a chloroplast respiratory chain. The immediate electron acceptor for the enzyme in this species is believed to be plastoquinone. Couples the redox reaction to proton translocation, and thus conserves the redox energy in a proton gradient. The chain is NAD(P)H-quinone oxidoreductase subunit H, chloroplastic from Nasturtium officinale (Watercress).